Here is a 153-residue protein sequence, read N- to C-terminus: Large ribosomal subunit protein uL13 (153 aa).

It belongs to the universal ribosomal protein uL13 family. In terms of assembly, part of the 50S ribosomal subunit.

Its function is as follows. This protein is one of the early assembly proteins of the 50S ribosomal subunit, although it is not seen to bind rRNA by itself. It is important during the early stages of 50S assembly. This Xanthobacter autotrophicus (strain ATCC BAA-1158 / Py2) protein is Large ribosomal subunit protein uL13.